The sequence spans 60 residues: Alpha-conotoxin-like 289 (60 aa).

The first 16 residues, 1–16 (MFTVFLLVVLATTVVS), serve as a signal peptide directing secretion. A propeptide spanning residues 17-42 (FTSDRAFRGRNAAAKASGLVGLTDKR) is cleaved from the precursor. Position 43 is a pyrrolidone carboxylic acid (glutamine 43). 2 cysteine pairs are disulfide-bonded: cysteine 45/cysteine 51 and cysteine 46/cysteine 59. The tract at residues 47 to 49 (SYP) is ser-Xaa-Pro motif, crucial for potent interaction with nAChR. Cysteine amide is present on cysteine 59.

This sequence belongs to the conotoxin A superfamily. As to expression, expressed by the venom duct.

It is found in the secreted. Its function is as follows. Alpha-conotoxins act on postsynaptic membranes, they bind to the nicotinic acetylcholine receptors (nAChR) and thus inhibit them. The polypeptide is Alpha-conotoxin-like 289 (Conus ammiralis (Admiral cone)).